Consider the following 457-residue polypeptide: Putative ankyrin repeat protein L112 (457 aa).

ANK repeat units lie at residues 62–91 (QRIT…NHNP), 104–132 (SKDT…ASIN), 133–162 (SSSL…EIIN), 193–219 (YINE…LDCS), 220–249 (ITVD…DPRK), 251–279 (KCWA…KPKE), 281–309 (NVDA…DTIT), 310–339 (RRDW…SQKS), 341–368 (NKAL…DFRQ), 400–429 (NNNE…DYNP), and 431–457 (KDQL…DTLK).

The polypeptide is Putative ankyrin repeat protein L112 (Acanthamoeba polyphaga mimivirus (APMV)).